Here is a 439-residue protein sequence, read N- to C-terminus: Tol-Pal system protein TolB (439 aa).

The first 22 residues, 1–22 (MTKFPRWLAMLVGLLFPLSALT), serve as a signal peptide directing secretion.

It belongs to the TolB family. As to quaternary structure, the Tol-Pal system is composed of five core proteins: the inner membrane proteins TolA, TolQ and TolR, the periplasmic protein TolB and the outer membrane protein Pal. They form a network linking the inner and outer membranes and the peptidoglycan layer.

Its subcellular location is the periplasm. Functionally, part of the Tol-Pal system, which plays a role in outer membrane invagination during cell division and is important for maintaining outer membrane integrity. This Xylella fastidiosa (strain Temecula1 / ATCC 700964) protein is Tol-Pal system protein TolB.